An 81-amino-acid chain; its full sequence is Small ribosomal subunit protein bS16 (81 aa).

This sequence belongs to the bacterial ribosomal protein bS16 family.

This chain is Small ribosomal subunit protein bS16, found in Clostridium acetobutylicum (strain ATCC 824 / DSM 792 / JCM 1419 / IAM 19013 / LMG 5710 / NBRC 13948 / NRRL B-527 / VKM B-1787 / 2291 / W).